A 119-amino-acid polypeptide reads, in one-letter code: Protein ELF4-LIKE 2 (119 aa).

Residues 91-119 (SVDASSEGESTGTLKSDGKANNQKRFRSG) are disordered. Over residues 93-111 (DASSEGESTGTLKSDGKAN) the composition is skewed to polar residues.

This sequence belongs to the EARLY FLOWERING 4 family. In terms of assembly, homodimer.

It is found in the nucleus. In terms of biological role, component of the central CCA1/LHY-TOC1 feedback loop in the circadian clock that promotes clock accuracy and is required for sustained rhythms in the absence of daily light/dark cycles. In Arabidopsis thaliana (Mouse-ear cress), this protein is Protein ELF4-LIKE 2 (EFL2).